The chain runs to 452 residues: Cobyrinate a,c-diamide synthase (452 aa).

Residues 248–441 (RVAYALDAAF…LHIHFYQNLA (194 aa)) enclose the GATase cobBQ-type domain. Catalysis depends on Cys-330, which acts as the Nucleophile.

Belongs to the CobB/CbiA family. Mg(2+) is required as a cofactor.

The catalysed reaction is cob(II)yrinate + 2 L-glutamine + 2 ATP + 2 H2O = cob(II)yrinate a,c diamide + 2 L-glutamate + 2 ADP + 2 phosphate + 2 H(+). It participates in cofactor biosynthesis; adenosylcobalamin biosynthesis; cob(II)yrinate a,c-diamide from sirohydrochlorin (anaerobic route): step 10/10. Its function is as follows. Catalyzes the ATP-dependent amidation of the two carboxylate groups at positions a and c of cobyrinate, using either L-glutamine or ammonia as the nitrogen source. The chain is Cobyrinate a,c-diamide synthase from Listeria monocytogenes serovar 1/2a (strain ATCC BAA-679 / EGD-e).